We begin with the raw amino-acid sequence, 183 residues long: Protein US32 (183 aa).

This sequence belongs to the herpesviridae US1 family.

The protein is Protein US32 (US32) of Homo sapiens (Human).